The primary structure comprises 57 residues: Probable antitoxin MazE1 (57 aa).

Forms a complex with cognate toxin MazF1.

In terms of biological role, antitoxin component of a type II toxin-antitoxin (TA) system. The chain is Probable antitoxin MazE1 (mazE1) from Mycobacterium tuberculosis (strain ATCC 25618 / H37Rv).